The primary structure comprises 235 residues: Small ribosomal subunit protein eS4 (235 aa).

Positions 43-114 (IPLLLIVRDM…DPHRFLRLIE (72 aa)) constitute an S4 RNA-binding domain.

This sequence belongs to the eukaryotic ribosomal protein eS4 family.

This chain is Small ribosomal subunit protein eS4, found in Korarchaeum cryptofilum (strain OPF8).